The primary structure comprises 424 residues: Na(+), Li(+), K(+)/H(+) antiporter (424 aa).

12 helical membrane-spanning segments follow: residues 15–35, 42–62, 74–94, 105–125, 141–161, 165–185, 227–247, 274–294, 305–325, 327–347, 367–389, and 393–415; these read VGEFFMNTSFWMVFPFLAIYF, GLAGMLLIISQIFSVAANLFG, MLVSAAVAQGFAFLLFALANS, VAFTLAGMCGSLYWPASQAMI, FYTTLNIAVVIGPLFGAVLFF, FELLLTVAIISVLLGLLLRFY, LLFVIAGILGAQTFMQLDLVI, TSFGILLAENGLIVALLTVVI, WVFFFSALLFGLSMAIFPMTS, FWIFFVAMAVFTFAELMVVGL, AASLRYTIGRMIAPISIPMTAWF, and WTFIILGSFAVLSGFVYLWMFHL.

The protein belongs to the major facilitator superfamily.

It localises to the cell membrane. Norfloxacin transport is inhibited by CCCP. Functionally, exhibits dual functions as a Na(+)(Li(+)/K(+))/H(+) antiporter and a multidrug efflux pump. Catalyzes the efflux of Na(+), Li(+) and K(+) in exchange for external protons. Shows a preference for Na(+), followed by K(+) and Li(+). Can also function as a multidrug efflux pump. Transports ethidium bromide and norfloxacin. The chain is Na(+), Li(+), K(+)/H(+) antiporter from Planococcus maritimus.